The following is a 146-amino-acid chain: Small ribosomal subunit protein uS9 (146 aa).

Belongs to the universal ribosomal protein uS9 family. In terms of assembly, component of the small ribosomal subunit.

The protein resides in the cytoplasm. In terms of biological role, component of the small ribosomal subunit. The ribosome is a large ribonucleoprotein complex responsible for the synthesis of proteins in the cell. The sequence is that of Small ribosomal subunit protein uS9 (rps16) from Ictalurus punctatus (Channel catfish).